The chain runs to 445 residues: Ribosomal protein uS12 methylthiotransferase RimO (445 aa).

The 116-residue stretch at 4–119 (LKFGLVSLGC…LDDAIEDFFN (116 aa)) folds into the MTTase N-terminal domain. [4Fe-4S] cluster-binding residues include cysteine 13, cysteine 48, cysteine 82, cysteine 156, cysteine 160, and cysteine 163. Positions 142 to 372 (TTGEYSSYVR…MLIQQQVSKN (231 aa)) constitute a Radical SAM core domain. The region spanning 375–441 (AKKIGKVYKV…EYDLIGVVYN (67 aa)) is the TRAM domain.

This sequence belongs to the methylthiotransferase family. RimO subfamily. It depends on [4Fe-4S] cluster as a cofactor.

It localises to the cytoplasm. It catalyses the reaction L-aspartate(89)-[ribosomal protein uS12]-hydrogen + (sulfur carrier)-SH + AH2 + 2 S-adenosyl-L-methionine = 3-methylsulfanyl-L-aspartate(89)-[ribosomal protein uS12]-hydrogen + (sulfur carrier)-H + 5'-deoxyadenosine + L-methionine + A + S-adenosyl-L-homocysteine + 2 H(+). Its function is as follows. Catalyzes the methylthiolation of an aspartic acid residue of ribosomal protein uS12. The sequence is that of Ribosomal protein uS12 methylthiotransferase RimO from Clostridium acetobutylicum (strain ATCC 824 / DSM 792 / JCM 1419 / IAM 19013 / LMG 5710 / NBRC 13948 / NRRL B-527 / VKM B-1787 / 2291 / W).